The sequence spans 921 residues: Isoleucine--tRNA ligase 1 (921 aa).

A 'HIGH' region motif is present at residues 57-67 (PYANGDIHMGH). Glu-552 contributes to the L-isoleucyl-5'-AMP binding site. Positions 593-597 (KMSKS) match the 'KMSKS' region motif. Position 596 (Lys-596) interacts with ATP. Zn(2+) contacts are provided by Cys-888, Cys-891, Cys-908, and Cys-911.

Belongs to the class-I aminoacyl-tRNA synthetase family. IleS type 1 subfamily. As to quaternary structure, monomer. Requires Zn(2+) as cofactor.

The protein resides in the cytoplasm. The enzyme catalyses tRNA(Ile) + L-isoleucine + ATP = L-isoleucyl-tRNA(Ile) + AMP + diphosphate. Catalyzes the attachment of isoleucine to tRNA(Ile). As IleRS can inadvertently accommodate and process structurally similar amino acids such as valine, to avoid such errors it has two additional distinct tRNA(Ile)-dependent editing activities. One activity is designated as 'pretransfer' editing and involves the hydrolysis of activated Val-AMP. The other activity is designated 'posttransfer' editing and involves deacylation of mischarged Val-tRNA(Ile). In Bacillus thuringiensis subsp. konkukian (strain 97-27), this protein is Isoleucine--tRNA ligase 1.